The sequence spans 332 residues: Mitotic spindle assembly checkpoint protein MAD2B (332 aa).

One can recognise an HORMA domain in the interval 4 to 332; sequence EHFCDCIGEF…RTFTEQSITK (329 aa). Disordered stretches follow at residues 181-204 and 225-244; these read KTQQ…NGFI and KSNQ…GDKD. Over residues 230 to 244 the composition is skewed to basic and acidic residues; it reads NKKEDNDDNNNGDKD.

The protein belongs to the MAD2 family.

The protein resides in the nucleus. Its function is as follows. Adapter protein able to interact with different proteins and involved in different biological processes. The sequence is that of Mitotic spindle assembly checkpoint protein MAD2B (mad2l2) from Dictyostelium discoideum (Social amoeba).